A 292-amino-acid polypeptide reads, in one-letter code: Poly(U)-specific endoribonuclease-B (292 aa).

The region spanning 8–285 is the EndoU domain; it reads VNHELSKLFN…IGTAYPALLS (278 aa). Residues His-162, His-178, and Lys-224 contribute to the active site.

This sequence belongs to the ENDOU family. Monomer. Mn(2+) serves as cofactor.

Its subcellular location is the nucleus. The enzyme catalyses uridylyl-uridylyl-ribonucleotide-RNA = a 3'-end uridylyl-2',3'-cyclophospho-uridine-RNA + a 5'-end dephospho-ribonucleoside-RNA. In terms of biological role, poly(U)-specific endoribonuclease involved in the processing of intron-encoded box C/D snoRNAs, such as U16 and U86. Releases products that have 2',3'-cyclic phosphate termini at the 3'-end. This chain is Poly(U)-specific endoribonuclease-B (endou-b), found in Xenopus laevis (African clawed frog).